We begin with the raw amino-acid sequence, 101 residues long: uncharacterized protein (101 aa).

Low complexity predominate over residues 65–79 (QEAAAPAGPQEPAEA). The disordered stretch occupies residues 65–101 (QEAAAPAGPQEPAEASGDAGKKEEVEEEEIEIDFGMF). Positions 89-101 (VEEEEIEIDFGMF) are enriched in acidic residues.

This is an uncharacterized protein from Encephalitozoon cuniculi (strain GB-M1) (Microsporidian parasite).